The following is a 184-amino-acid chain: Peptide deformylase (184 aa).

Cys-111 and His-154 together coordinate Fe cation. Glu-155 is an active-site residue. Residue His-158 coordinates Fe cation.

Belongs to the polypeptide deformylase family. Requires Fe(2+) as cofactor.

It catalyses the reaction N-terminal N-formyl-L-methionyl-[peptide] + H2O = N-terminal L-methionyl-[peptide] + formate. Its function is as follows. Removes the formyl group from the N-terminal Met of newly synthesized proteins. Requires at least a dipeptide for an efficient rate of reaction. N-terminal L-methionine is a prerequisite for activity but the enzyme has broad specificity at other positions. In Pediococcus pentosaceus (strain ATCC 25745 / CCUG 21536 / LMG 10740 / 183-1w), this protein is Peptide deformylase.